A 430-amino-acid chain; its full sequence is tRNA(Ile)-lysidine synthase (430 aa).

27–32 (SGGSDS) contacts ATP.

Belongs to the tRNA(Ile)-lysidine synthase family.

It is found in the cytoplasm. It carries out the reaction cytidine(34) in tRNA(Ile2) + L-lysine + ATP = lysidine(34) in tRNA(Ile2) + AMP + diphosphate + H(+). In terms of biological role, ligates lysine onto the cytidine present at position 34 of the AUA codon-specific tRNA(Ile) that contains the anticodon CAU, in an ATP-dependent manner. Cytidine is converted to lysidine, thus changing the amino acid specificity of the tRNA from methionine to isoleucine. In Rickettsia bellii (strain OSU 85-389), this protein is tRNA(Ile)-lysidine synthase.